The sequence spans 414 residues: TAR DNA-binding protein 43 (414 aa).

2 consecutive RRM domains span residues 104 to 200 (SDLI…RCTE) and 191 to 262 (RKVF…NAEP). Positions 261 to 274 (EPKHNSNRQLERGG) are enriched in basic and acidic residues. 2 disordered regions span residues 261–303 (EPKH…GNNQ) and 341–373 (ASQQ…GNNS). The span at 275–303 (RFGGNPGGFGNQGGFGNSRGGGGGLGNNQ) shows a compositional bias: gly residues. The segment covering 342 to 373 (SQQNQSGPSGNNQPQGNMQREQNQGFSSGNNS) has biased composition (low complexity).

Homodimer.

The protein localises to the nucleus. It localises to the cytoplasm. It is found in the stress granule. The protein resides in the mitochondrion. Probably involved in transcriptional repression. May play a role in the maintenance of the circadian clock periodicity. The chain is TAR DNA-binding protein 43 (TARDBP) from Gallus gallus (Chicken).